A 157-amino-acid polypeptide reads, in one-letter code: Protein Smg homolog (157 aa).

The protein belongs to the Smg family.

The polypeptide is Protein Smg homolog (Alkalilimnicola ehrlichii (strain ATCC BAA-1101 / DSM 17681 / MLHE-1)).